A 555-amino-acid chain; its full sequence is Phosphoglucomutase (555 aa).

Residues Arg22 and Ser114 each coordinate alpha-D-glucose 1,6-bisphosphate. The active-site Phosphoserine intermediate is Ser114. Residues Ser114, Asp279, Asp281, and Asp283 each coordinate Mg(2+). At Ser114 the chain carries Phosphoserine. Alpha-D-glucose 1,6-bisphosphate contacts are provided by Asp283, Arg284, Thr347, Glu366, Ser368, and Lys379.

It belongs to the phosphohexose mutase family. Monomer. It depends on Mg(2+) as a cofactor.

It localises to the cytoplasm. It carries out the reaction alpha-D-glucose 1-phosphate = alpha-D-glucose 6-phosphate. It catalyses the reaction O-phospho-L-seryl-[protein] + alpha-D-glucose 1-phosphate = alpha-D-glucose 1,6-bisphosphate + L-seryl-[protein]. The catalysed reaction is alpha-D-glucose 1,6-bisphosphate + L-seryl-[protein] = O-phospho-L-seryl-[protein] + alpha-D-glucose 6-phosphate. In terms of biological role, catalyzes the reversible isomerization of alpha-D-glucose 1-phosphate to alpha-D-glucose 6-phosphate. The mechanism proceeds via the intermediate compound alpha-D-glucose 1,6-bisphosphate. Key enzyme in hexose metabolism. The reverse reaction is an essential step for biosynthesis because glucose 1-phosphate is the starting point for the synthesis of UDP-glucose, which acts as a precursor for the synthesis of oligosaccharides and trehalose. The sequence is that of Phosphoglucomutase (pgmA) from Aspergillus oryzae (strain ATCC 42149 / RIB 40) (Yellow koji mold).